The following is a 220-amino-acid chain: MDTSDQYYRAIKKIKEASDSSNKAYLTSSKLANMLGLSQQSASRIIIDLEKLGYITRTVSKRGQLLTITEKGLDLLYTEFAELSRILSIKSNIVMTGIVVPGMGEGKYYISRKQYIIQFQEKLGIIPYLGTLNIKVDPSSIPELRKLRGFTGIHIEGFRTEDRTFGSVKAFRCKTNGVPSFLIMPERTVYTDVVEIISDKYLRNELNLKDGDEVTIEVTA.

The segment at 1–92 (MDTSDQYYRA…LSRILSIKSN (92 aa)) is H-T-H motif-like. The tract at residues 93–220 (IVMTGIVVPG…GDEVTIEVTA (128 aa)) is riboflavin kinase. Residue 102–107 (GMGEGK) coordinates CDP. Mg(2+)-binding residues include Thr131 and Asn133. Residues Thr188 and Glu195 each contribute to the FMN site. 200 to 203 (KYLR) provides a ligand contact to CDP.

This sequence belongs to the archaeal riboflavin kinase family. It depends on Mg(2+) as a cofactor.

It carries out the reaction riboflavin + CTP = CDP + FMN + H(+). It participates in cofactor biosynthesis; FMN biosynthesis; FMN from riboflavin (CTP route): step 1/1. Functionally, catalyzes the CTP-dependent phosphorylation of riboflavin (vitamin B2) to form flavin mononucleotide (FMN). This is Riboflavin kinase (ribK) from Thermoplasma volcanium (strain ATCC 51530 / DSM 4299 / JCM 9571 / NBRC 15438 / GSS1).